We begin with the raw amino-acid sequence, 206 residues long: Tumor protein D54 (206 aa).

M1 is subject to N-acetylmethionine. Polar residues predominate over residues 1–14 (MDSAGQDINLNSPN). The tract at residues 1 to 24 (MDSAGQDINLNSPNKGLLSDSMTD) is disordered. Phosphoserine is present on residues S3, S12, S19, and S21. Positions 38-82 (VEGLTEAEEEELRAELTKVEEEIVTLRQVLAAKERHCGELKRRLG) form a coiled coil. Residues S96, S149, and S161 each carry the phosphoserine modification. T163 bears the Phosphothreonine mark. S166 bears the Phosphoserine mark. Residue T173 is modified to Phosphothreonine. A compositionally biased stretch (basic and acidic residues) spans 175-185 (KSKVVGDRENG). The tract at residues 175–206 (KSKVVGDRENGSDSLPSSAGSGDKPLSDPAPF) is disordered. A phosphoserine mark is found at S192 and S195.

It belongs to the TPD52 family. In terms of assembly, forms a homodimer or heterodimer with other members of the family. Interacts with MAL2.

In Pongo abelii (Sumatran orangutan), this protein is Tumor protein D54 (TPD52L2).